Consider the following 552-residue polypeptide: Phosphoglucomutase (552 aa).

The Phosphoserine intermediate role is filled by serine 143. Mg(2+) is bound by residues serine 143, aspartate 295, aspartate 297, and aspartate 299.

It belongs to the phosphohexose mutase family. Mg(2+) is required as a cofactor.

It catalyses the reaction alpha-D-glucose 1-phosphate = alpha-D-glucose 6-phosphate. It functions in the pathway glycolipid metabolism; diglucosyl-diacylglycerol biosynthesis. In terms of biological role, catalyzes the interconversion between glucose-6-phosphate and alpha-glucose-1-phosphate. This is the first step in the biosynthesis of diglucosyl-diacylglycerol (Glc2-DAG), i.e. the predominant glycolipid found in the S.aureus membrane, which is also used as a membrane anchor for lipoteichoic acid (LTA). The sequence is that of Phosphoglucomutase (pgcA) from Staphylococcus aureus (strain MSSA476).